The sequence spans 264 residues: Thymidylate synthase (264 aa).

Arg21 is a dUMP binding site. His51 provides a ligand contact to (6R)-5,10-methylene-5,6,7,8-tetrahydrofolate. 126–127 (RR) contributes to the dUMP binding site. The active-site Nucleophile is Cys146. DUMP-binding positions include 166–169 (RSAD), Asn177, and 207–209 (HIY). (6R)-5,10-methylene-5,6,7,8-tetrahydrofolate is bound at residue Asp169. A (6R)-5,10-methylene-5,6,7,8-tetrahydrofolate-binding site is contributed by Ala263.

It belongs to the thymidylate synthase family. Bacterial-type ThyA subfamily. As to quaternary structure, homodimer.

The protein localises to the cytoplasm. It carries out the reaction dUMP + (6R)-5,10-methylene-5,6,7,8-tetrahydrofolate = 7,8-dihydrofolate + dTMP. It functions in the pathway pyrimidine metabolism; dTTP biosynthesis. Functionally, catalyzes the reductive methylation of 2'-deoxyuridine-5'-monophosphate (dUMP) to 2'-deoxythymidine-5'-monophosphate (dTMP) while utilizing 5,10-methylenetetrahydrofolate (mTHF) as the methyl donor and reductant in the reaction, yielding dihydrofolate (DHF) as a by-product. This enzymatic reaction provides an intracellular de novo source of dTMP, an essential precursor for DNA biosynthesis. This chain is Thymidylate synthase, found in Coxiella burnetii (strain Dugway 5J108-111).